Consider the following 402-residue polypeptide: Tyrosine--tRNA ligase (402 aa).

Residues 48–57 carry the 'HIGH' region motif; it reads PTGSDIHLGH. The 'KMSKS' region signature appears at 235–239; sequence KMSKS. K238 contributes to the ATP binding site. One can recognise an S4 RNA-binding domain in the interval 338-402; it reads AKAFYLVSAV…GKKKFVRLVL (65 aa).

This sequence belongs to the class-I aminoacyl-tRNA synthetase family. TyrS type 2 subfamily. As to quaternary structure, homodimer.

It localises to the cytoplasm. The enzyme catalyses tRNA(Tyr) + L-tyrosine + ATP = L-tyrosyl-tRNA(Tyr) + AMP + diphosphate + H(+). Functionally, catalyzes the attachment of tyrosine to tRNA(Tyr) in a two-step reaction: tyrosine is first activated by ATP to form Tyr-AMP and then transferred to the acceptor end of tRNA(Tyr). The polypeptide is Tyrosine--tRNA ligase (Synechococcus elongatus (strain ATCC 33912 / PCC 7942 / FACHB-805) (Anacystis nidulans R2)).